Consider the following 91-residue polypeptide: Elongation factor 1-beta (91 aa).

This sequence belongs to the EF-1-beta/EF-1-delta family.

Promotes the exchange of GDP for GTP in EF-1-alpha/GDP, thus allowing the regeneration of EF-1-alpha/GTP that could then be used to form the ternary complex EF-1-alpha/GTP/AAtRNA. The protein is Elongation factor 1-beta of Thermococcus onnurineus (strain NA1).